A 160-amino-acid chain; its full sequence is Probable small nuclear ribonucleoprotein-associated protein B (160 aa).

Residues 4–86 (SKNNKMMAHL…IVSMTVDGPP (83 aa)) form the Sm domain. The segment at 80–160 (MTVDGPPPRD…YGGPPGGRPF (81 aa)) is disordered. Gly residues-rich tracts occupy residues 99 to 113 (GGAG…GGRG), 128 to 143 (APGG…GGPG), and 150 to 160 (GYGGPPGGRPF).

This sequence belongs to the snRNP SmB/SmN family.

The protein localises to the nucleus. It localises to the cytoplasm. The protein resides in the cytosol. Plays a role in pre-mRNA splicing as a core component of the spliceosomal U1, U2, U4 and U5 small nuclear ribonucleoproteins (snRNPs), the building blocks of the spliceosome. This chain is Probable small nuclear ribonucleoprotein-associated protein B (snr-2), found in Caenorhabditis elegans.